Here is a 185-residue protein sequence, read N- to C-terminus: Dual specificity protein phosphatase 3 (185 aa).

Residues 28–179 (QPCNEVVPRV…LCQLNDRLAK (152 aa)) enclose the Tyrosine-protein phosphatase domain. The active-site Phosphocysteine intermediate is the C124.

The protein belongs to the protein-tyrosine phosphatase family. Non-receptor class dual specificity subfamily. Microtubule inner protein component of sperm flagellar doublet microtubules. Interacts with VRK3; this interaction activates DUSP3 phosphatase activity.

It is found in the nucleus. The protein localises to the cytoplasm. The protein resides in the cytoskeleton. Its subcellular location is the flagellum axoneme. The catalysed reaction is O-phospho-L-tyrosyl-[protein] + H2O = L-tyrosyl-[protein] + phosphate. The enzyme catalyses O-phospho-L-seryl-[protein] + H2O = L-seryl-[protein] + phosphate. It carries out the reaction O-phospho-L-threonyl-[protein] + H2O = L-threonyl-[protein] + phosphate. In terms of biological role, shows activity both for tyrosine-protein phosphate and serine-protein phosphate, but displays a strong preference toward phosphotyrosines. Specifically dephosphorylates and inactivates ERK1 and ERK2. The chain is Dual specificity protein phosphatase 3 (Dusp3) from Mus musculus (Mouse).